The following is a 1284-amino-acid chain: Zinc finger protein 423 (1284 aa).

Disordered stretches follow at residues 1–64 (MHKK…MEDE) and 87–117 (AHRCPGDGDDDPQLSWVASSPSSKDVASPTQ). Positions 34-46 (CDQKTSRALEDRN) are enriched in basic and acidic residues. Residues S47 and S50 each carry the phosphoserine modification. Over residues 54 to 64 (RNEDDEDMEDE) the composition is skewed to acidic residues. The C2H2-type 1; degenerate zinc-finger motif lies at 67–93 (YTCDHCQQDFESLADLTDHRAHRCPGD). Polar residues predominate over residues 102-117 (WVASSPSSKDVASPTQ). 7 C2H2-type zinc fingers span residues 138–160 (YPCQFCDKSFIRLSYLKRHEQIH), 166–188 (FKCTYCSRLFKHKRSRDRHIKLH), 194–216 (YHCHECEAAFSRSDHLKIHLKTH), 222–244 (FKCTVCKRGFSSTSSLQSHMQAH), 263–286 (FMCDYCEDTFSQTEELEKHVLTRH), 295–318 (LQCIHCPEVFVDENTLLAHIHQAH), and 323–345 (HKCPMCPEQFSSVEGVYCHLDSH). Residues 346–398 (RQPDSSNHSVSPDPVLGSVASMSSATPDSSASVERGSTPDSTLKPLRGQKKMR) form a disordered region. The segment covering 363 to 377 (SVASMSSATPDSSAS) has biased composition (low complexity). The C2H2-type 9; degenerate zinc-finger motif lies at 409-433 (YSCPYCSKRDFNSLAVLEIHLKTIH). 3 C2H2-type zinc fingers span residues 441–464 (HTCQICLDSMPTLYNLNEHVRKLH), 480–503 (FHCNYCPEMFADINSLQEHIRVSH), and 517–540 (FFCNQCSMGFLTESSLTEHIQQAH). Residues 563 to 588 (YSCPYCTNSPIFGSILKLTKHIKENH) form a C2H2-type 13; atypical zinc finger. Positions 590 to 624 (NIPLAHSKKSKAEQSPVSSDVEVSSPKRQRLSASA) are disordered. Phosphoserine is present on S604. A compositionally biased stretch (low complexity) spans 604 to 615 (SPVSSDVEVSSP). 7 consecutive C2H2-type zinc fingers follow at residues 632–654 (YPCNQCDLKFSNFESFQTHLKLH), 662–684 (QACPQCKEDFDSQESLLQHLTVH), 692–715 (YVCESCDKQFSSVDDLQKHLLDMH), 720–743 (YHCTLCQEVFDSKVSIQVHLAVKH), 750–773 (YRCTACNWDFRKEADLQVHVKHSH), 781–803 (HKCIFCGETFSTEVELQCHITTH), and 807–830 (YNCKFCSKAFHAIILLEKHLREKH). A C2H2-type 21; degenerate zinc finger spans residues 886–908 (YGCDICGAAYTMEVLLQNHRLRD). C2H2-type zinc fingers lie at residues 930–952 (HKCNVCSRTFFSENGLREHLQTH), 959–981 (YMCPICGERFPSLLTLTEHKVTH), and 1020–1042 (FRCVVCMQTVTSTLELKIHGTFH). S1054 carries the phosphoserine modification. A C2H2-type 25; degenerate zinc finger spans residues 1064–1082 (YKCALCLKEFRSKQDLVKL). C2H2-type zinc fingers lie at residues 1120–1143 (LRCPECSVKFESAEDLESHMQVDH), 1168–1190 (YQCIKCQMTFENEREIQIHVANH), 1198–1220 (HECKLCNQMFDSPAKLLCHLIEH), 1229–1252 (FKCPVCFTVFVQANKLQQHIFAVH), and 1259–1282 (YDCSQCPQKFFFQTELQNHTMSQH). Basic and acidic residues predominate over residues 1136–1147 (ESHMQVDHRDLT). Residues 1136–1163 (ESHMQVDHRDLTPETSGPRKGTQTSPVP) are disordered.

This sequence belongs to the krueppel C2H2-type zinc-finger protein family. As to quaternary structure, homodimer. Interacts with EBF1. Interacts with SMAD1 and SMAD4. Interacts with PARP1. Interacts with CEP290. As to expression, expressed in brain, lung, skeletal muscle, heart, pancreas and kidney but not liver or placenta. Also expressed in aorta, ovary, pituitary, small intestine, fetal brain, fetal kidney and, within the adult brain, in the substantia nigra, medulla, amygdala, thalamus and cerebellum.

It localises to the nucleus. Its function is as follows. Transcription factor that can both act as an activator or a repressor depending on the context. Plays a central role in BMP signaling and olfactory neurogenesis. Associates with SMADs in response to BMP2 leading to activate transcription of BMP target genes. Acts as a transcriptional repressor via its interaction with EBF1, a transcription factor involved in terminal olfactory receptor neurons differentiation; this interaction preventing EBF1 to bind DNA and activate olfactory-specific genes. Involved in olfactory neurogenesis by participating in a developmental switch that regulates the transition from differentiation to maturation in olfactory receptor neurons. Controls proliferation and differentiation of neural precursors in cerebellar vermis formation. In Homo sapiens (Human), this protein is Zinc finger protein 423 (ZNF423).